Consider the following 371-residue polypeptide: Putative glutamate--cysteine ligase 2 (371 aa).

It belongs to the glutamate--cysteine ligase type 2 family. YbdK subfamily.

It catalyses the reaction L-cysteine + L-glutamate + ATP = gamma-L-glutamyl-L-cysteine + ADP + phosphate + H(+). In terms of biological role, ATP-dependent carboxylate-amine ligase which exhibits weak glutamate--cysteine ligase activity. The chain is Putative glutamate--cysteine ligase 2 from Burkholderia multivorans (strain ATCC 17616 / 249).